The chain runs to 342 residues: Flap endonuclease 1 (342 aa).

An N-domain region spans residues Met-1–Arg-99. Residues Asp-28, Asp-81, Glu-153, Glu-155, Asp-174, Asp-176, and Asp-237 each contribute to the Mg(2+) site. Residues Glu-117–Lys-259 are I-domain.

This sequence belongs to the XPG/RAD2 endonuclease family. FEN1 subfamily. In terms of assembly, interacts with PCNA. PCNA stimulates the nuclease activity without altering cleavage specificity. The cofactor is Mg(2+).

Structure-specific nuclease with 5'-flap endonuclease and 5'-3' exonuclease activities involved in DNA replication and repair. During DNA replication, cleaves the 5'-overhanging flap structure that is generated by displacement synthesis when DNA polymerase encounters the 5'-end of a downstream Okazaki fragment. Binds the unpaired 3'-DNA end and kinks the DNA to facilitate 5' cleavage specificity. Cleaves one nucleotide into the double-stranded DNA from the junction in flap DNA, leaving a nick for ligation. Also involved in the base excision repair (BER) pathway. Acts as a genome stabilization factor that prevents flaps from equilibrating into structures that lead to duplications and deletions. Also possesses 5'-3' exonuclease activity on nicked or gapped double-stranded DNA. The polypeptide is Flap endonuclease 1 (Korarchaeum cryptofilum (strain OPF8)).